The sequence spans 69 residues: Toxin Lc b (69 aa).

4 disulfide bridges follow: cysteine 3/cysteine 20, cysteine 13/cysteine 41, cysteine 45/cysteine 56, and cysteine 57/cysteine 62.

Belongs to the three-finger toxin family. Long-chain subfamily. Type II alpha-neurotoxin sub-subfamily. In terms of tissue distribution, expressed by the venom gland.

The protein localises to the secreted. Binds with high affinity to muscular nicotinic acetylcholine receptors (nAChRs), whereas it binds with a low affinity to neuronal alpha-7/CHRNA7 nAChRs. This is Toxin Lc b from Laticauda colubrina (Yellow-lipped sea krait).